Here is a 947-residue protein sequence, read N- to C-terminus: Bifunctional glutamine synthetase adenylyltransferase/adenylyl-removing enzyme (947 aa).

The tract at residues 1–440 is adenylyl removase; sequence MTPLSSPLSQ…VFNELIGDDE (440 aa). An adenylyl transferase region spans residues 450–947; the sequence is SEPWREVWQD…ASWRKWLVAV (498 aa).

This sequence belongs to the GlnE family. Mg(2+) serves as cofactor.

The catalysed reaction is [glutamine synthetase]-O(4)-(5'-adenylyl)-L-tyrosine + phosphate = [glutamine synthetase]-L-tyrosine + ADP. The enzyme catalyses [glutamine synthetase]-L-tyrosine + ATP = [glutamine synthetase]-O(4)-(5'-adenylyl)-L-tyrosine + diphosphate. In terms of biological role, involved in the regulation of glutamine synthetase GlnA, a key enzyme in the process to assimilate ammonia. When cellular nitrogen levels are high, the C-terminal adenylyl transferase (AT) inactivates GlnA by covalent transfer of an adenylyl group from ATP to specific tyrosine residue of GlnA, thus reducing its activity. Conversely, when nitrogen levels are low, the N-terminal adenylyl removase (AR) activates GlnA by removing the adenylyl group by phosphorolysis, increasing its activity. The regulatory region of GlnE binds the signal transduction protein PII (GlnB) which indicates the nitrogen status of the cell. The chain is Bifunctional glutamine synthetase adenylyltransferase/adenylyl-removing enzyme from Salmonella gallinarum (strain 287/91 / NCTC 13346).